The following is a 281-amino-acid chain: MITSAHIDDIRTQVRAWRAQGETVAFVPTMGNLHQGHITLVKEAAKKCDHVVVSIFVNPMQFGQNEDLDAYPRTLEADSQALTVAGAELLFTPTPAIIYPKGLAQQTYVEVPGISDVLCGASRPGHFRGVATIVCKLFNIVLPDVAFFGNKDYQQLLVIRTMVEDLSLPIEIIGVDTIREASGLAMSSRNGYLTEEEKAAAPALKKAIDAMAQGIKQGVSIEQVTEEAKASLIAAGFTPDYLEVRHATTLANAEPQDQALVILAAAYLGKARLIDNLRFDR.

Residue 30–37 (MGNLHQGH) participates in ATP binding. His-37 functions as the Proton donor in the catalytic mechanism. Gln-61 is a binding site for (R)-pantoate. Gln-61 contributes to the beta-alanine binding site. 149-152 (GNKD) lines the ATP pocket. Gln-155 serves as a coordination point for (R)-pantoate. Residues Ile-178 and 186–189 (MSSR) each bind ATP.

It belongs to the pantothenate synthetase family. In terms of assembly, homodimer.

Its subcellular location is the cytoplasm. It catalyses the reaction (R)-pantoate + beta-alanine + ATP = (R)-pantothenate + AMP + diphosphate + H(+). The protein operates within cofactor biosynthesis; (R)-pantothenate biosynthesis; (R)-pantothenate from (R)-pantoate and beta-alanine: step 1/1. Catalyzes the condensation of pantoate with beta-alanine in an ATP-dependent reaction via a pantoyl-adenylate intermediate. This Shewanella sp. (strain MR-7) protein is Pantothenate synthetase.